A 523-amino-acid polypeptide reads, in one-letter code: Siroheme synthase (523 aa).

Positions 1–203 (MNTFPLFFKL…GNENEAIAQL (203 aa)) are precorrin-2 dehydrogenase /sirohydrochlorin ferrochelatase. NAD(+) contacts are provided by residues 22 to 23 (DV) and 43 to 44 (PS). Phosphoserine is present on Ser128. Positions 231-523 (GEVYIVGAGP…DGGLEQLVID (293 aa)) are uroporphyrinogen-III C-methyltransferase. Pro240 provides a ligand contact to S-adenosyl-L-methionine. Asp263 (proton acceptor) is an active-site residue. The Proton donor role is filled by Lys285. S-adenosyl-L-methionine is bound by residues 316 to 318 (GGD), Ile321, 346 to 347 (TA), Met398, and Ala427.

It in the N-terminal section; belongs to the precorrin-2 dehydrogenase / sirohydrochlorin ferrochelatase family. The protein in the C-terminal section; belongs to the precorrin methyltransferase family.

The catalysed reaction is uroporphyrinogen III + 2 S-adenosyl-L-methionine = precorrin-2 + 2 S-adenosyl-L-homocysteine + H(+). It catalyses the reaction precorrin-2 + NAD(+) = sirohydrochlorin + NADH + 2 H(+). The enzyme catalyses siroheme + 2 H(+) = sirohydrochlorin + Fe(2+). It participates in cofactor biosynthesis; adenosylcobalamin biosynthesis; precorrin-2 from uroporphyrinogen III: step 1/1. Its pathway is cofactor biosynthesis; adenosylcobalamin biosynthesis; sirohydrochlorin from precorrin-2: step 1/1. The protein operates within porphyrin-containing compound metabolism; siroheme biosynthesis; precorrin-2 from uroporphyrinogen III: step 1/1. It functions in the pathway porphyrin-containing compound metabolism; siroheme biosynthesis; siroheme from sirohydrochlorin: step 1/1. It participates in porphyrin-containing compound metabolism; siroheme biosynthesis; sirohydrochlorin from precorrin-2: step 1/1. Functionally, multifunctional enzyme that catalyzes the SAM-dependent methylations of uroporphyrinogen III at position C-2 and C-7 to form precorrin-2 via precorrin-1. Then it catalyzes the NAD-dependent ring dehydrogenation of precorrin-2 to yield sirohydrochlorin. Finally, it catalyzes the ferrochelation of sirohydrochlorin to yield siroheme. The chain is Siroheme synthase from Psychrobacter cryohalolentis (strain ATCC BAA-1226 / DSM 17306 / VKM B-2378 / K5).